Reading from the N-terminus, the 503-residue chain is SusD-like protein P38 (503 aa).

The signal sequence occupies residues 1-21 (MKKFKNISITFLILISLGVLN).

This sequence belongs to the SusD family.

The protein localises to the cell outer membrane. In terms of biological role, polysaccharide-binding protein probably involved in ulvan degradation. Ulvan is the main polysaccharide component of the Ulvales (green seaweed) cell wall. It is composed of disaccharide building blocks comprising 3-sulfated rhamnose (Rha3S) linked to D-glucuronic acid (GlcA), L-iduronic acid (IduA), or D-xylose (Xyl). The SusD-like protein may mediate ulvan oligomer-binding before transport in the periplasm for further degradation. The chain is SusD-like protein P38 from Formosa agariphila (strain DSM 15362 / KCTC 12365 / LMG 23005 / KMM 3901 / M-2Alg 35-1).